A 190-amino-acid polypeptide reads, in one-letter code: Potassium-transporting ATPase KdpC subunit (190 aa).

The helical transmembrane segment at 10–30 threads the bilayer; it reads LLVFLTILTGGVYPLATTVLG.

Belongs to the KdpC family. As to quaternary structure, the system is composed of three essential subunits: KdpA, KdpB and KdpC.

The protein localises to the cell inner membrane. Functionally, part of the high-affinity ATP-driven potassium transport (or Kdp) system, which catalyzes the hydrolysis of ATP coupled with the electrogenic transport of potassium into the cytoplasm. This subunit acts as a catalytic chaperone that increases the ATP-binding affinity of the ATP-hydrolyzing subunit KdpB by the formation of a transient KdpB/KdpC/ATP ternary complex. The sequence is that of Potassium-transporting ATPase KdpC subunit from Cronobacter sakazakii (strain ATCC BAA-894) (Enterobacter sakazakii).